A 265-amino-acid polypeptide reads, in one-letter code: RWD domain-containing protein 3 (265 aa).

The region spanning 7–114 (EEVAALSAIY…WTQQNLNNLI (108 aa)) is the RWD domain.

The protein localises to the nucleus. The protein resides in the cytoplasm. In terms of biological role, enhancer of SUMO conjugation. Increases SUMO conjugation to proteins by promoting the: binding of E1 and E2 enzymes, thioester linkage between SUMO and ube2i/ubc9 and transfer of SUMO to specific target proteins which include hif1a, pias, nfkbia, nr3c1 and top1. Has no effect on ubiquitination. The sequence is that of RWD domain-containing protein 3 (rwdd3) from Xenopus tropicalis (Western clawed frog).